The sequence spans 360 residues: Peptide chain release factor 1 (360 aa).

At glutamine 235 the chain carries N5-methylglutamine.

The protein belongs to the prokaryotic/mitochondrial release factor family. Methylated by PrmC. Methylation increases the termination efficiency of RF1.

The protein localises to the cytoplasm. Functionally, peptide chain release factor 1 directs the termination of translation in response to the peptide chain termination codons UAG and UAA. This Blochmanniella pennsylvanica (strain BPEN) protein is Peptide chain release factor 1.